A 79-amino-acid chain; its full sequence is Sec-independent protein translocase protein TatA (79 aa).

Residues 1-21 (MGGFTSIWHWVIVLLVIVLLF) traverse the membrane as a helical segment. The disordered stretch occupies residues 54–79 (ELKTLDAQATQTKVHETSEIKSKQES). Positions 66–79 (KVHETSEIKSKQES) are enriched in basic and acidic residues.

The protein belongs to the TatA/E family. As to quaternary structure, the Tat system comprises two distinct complexes: a TatABC complex, containing multiple copies of TatA, TatB and TatC subunits, and a separate TatA complex, containing only TatA subunits. Substrates initially bind to the TatABC complex, which probably triggers association of the separate TatA complex to form the active translocon.

It is found in the cell inner membrane. In terms of biological role, part of the twin-arginine translocation (Tat) system that transports large folded proteins containing a characteristic twin-arginine motif in their signal peptide across membranes. TatA could form the protein-conducting channel of the Tat system. In Helicobacter pylori (strain J99 / ATCC 700824) (Campylobacter pylori J99), this protein is Sec-independent protein translocase protein TatA.